Here is a 319-residue protein sequence, read N- to C-terminus: Ribosomal RNA small subunit methyltransferase H (319 aa).

Residues 35–37 (AGH), Asp-55, Phe-84, Asp-104, and Gln-111 contribute to the S-adenosyl-L-methionine site.

It belongs to the methyltransferase superfamily. RsmH family.

It localises to the cytoplasm. It catalyses the reaction cytidine(1402) in 16S rRNA + S-adenosyl-L-methionine = N(4)-methylcytidine(1402) in 16S rRNA + S-adenosyl-L-homocysteine + H(+). Its function is as follows. Specifically methylates the N4 position of cytidine in position 1402 (C1402) of 16S rRNA. This Enterococcus hirae protein is Ribosomal RNA small subunit methyltransferase H.